Here is a 339-residue protein sequence, read N- to C-terminus: Annexin A2 (339 aa).

The residue at position 2 (S2) is an N-acetylserine. Residues 2–24 (STVHEILCKLSLEGDHSTPASAY) form an S100A10-binding site region. Phosphotyrosine; by SRC is present on Y24. S26 carries the phosphoserine; by PKC modification. Annexin repeat units lie at residues 33–104 (FDAE…GLLK) and 105–176 (TPAQ…ALAK). K49 is modified (N6-acetyllysine; alternate). Residue K49 forms a Glycyl lysine isopeptide (Lys-Gly) (interchain with G-Cter in SUMO1); alternate linkage. Residue K49 forms a Glycyl lysine isopeptide (Lys-Gly) (interchain with G-Cter in SUMO2); alternate linkage. At K152 the chain carries N6-acetyllysine. Phosphoserine is present on S184. Annexin repeat units follow at residues 189–261 (ELID…NLVQ) and 265–336 (NKPL…YLCG). Y199 is modified (phosphotyrosine). K227 bears the N6-acetyllysine mark.

The protein belongs to the annexin family. As to quaternary structure, heterotetramer containing 2 light chains of S100A10/p11 and 2 heavy chains of ANXA2/p36. Interacts with ATP1B1. Interacts with DYSF. Interacts with COCH. Interacts (via repeat Annexin 1) with PCSK9 (via the C-terminal domain); the interaction inhibits the degradation of LDLR. Interacts with CEACAM1 (via the cytoplasmic domain); this interaction is regulated by phosphorylation of CEACAM1. Interacts with APPL2 and APPL1; targets APPL2 to endosomes and acting in parallel to RAB5A. Interacts with S100A4. May interact with UBAP2. Interacts with PLEKHG4B; this interaction is required for PLEKHG4B localization to cell-cell adhesions. In terms of assembly, (Microbial infection) Interacts with classical swine fever virus envelope glycoprotein E2. In terms of processing, ISGylated.

Its subcellular location is the secreted. The protein localises to the extracellular space. It localises to the extracellular matrix. It is found in the basement membrane. The protein resides in the melanosome. In terms of biological role, calcium-regulated membrane-binding protein whose affinity for calcium is greatly enhanced by anionic phospholipids. It binds two calcium ions with high affinity. May be involved in heat-stress response. Inhibits PCSK9-enhanced LDLR degradation, probably reduces PCSK9 protein levels via a translational mechanism but also competes with LDLR for binding with PCSK9. Binds to endosomes damaged by phagocytosis of particulate wear debris and participates in endosomal membrane stabilization, thereby limiting NLRP3 inflammasome activation. Required for endothelial cell surface plasmin generation and may support fibrinolytic surveillance and neoangiogenesis. Functionally, (Microbial infection) May serve as a receptor for classical swine fever virus (CSFV). Promotes CSFV infection. The sequence is that of Annexin A2 (ANXA2) from Sus scrofa (Pig).